The following is a 576-amino-acid chain: MNEKHPGPLVVSGKLSDGERMKSESNFLRGTIAEDLNNGLTGGFSGDNFLLIRFHGMYQQDDRDIRAERAEQKLEPRHAMMLRCRLPGGIITPQQWLGIDKFAADNTLYGSIRITNRQTFQFHGILKGNVKPAHQLLNELGLDALATANDVNRNVLCTSNPVESALHQEAYEWAKKISEHLLPRTRAYAEIWLDAEKVATTDEEPILGATYLPRKFKTTVVIPPQNDVDLHANDLNFVAVADKGKLIGFNVLVGGGLSIAHGDKNTYPRKASEFGYIPLKHTLAIAEAVVTTQRDWGNRTDRKNAKTKYTLERVGVETFKAEVEKRAGVSFSAIKPYQFIGRGDRIGWVKGVDKKWHLTLFVENGRLLDYPGRSLKTGVAEIAKIHQGDFRLTANQNLIVAGVPEKDKARIEALAREHGLMDDNVTSQRENSMACVSFPTCPLAMAEAERFLPEFVTRVEGILQQHGLADEHIVLRVTGCPNGCGRALLAEVGLVGKAVGRYNLHLGGNREGTRIPRMYRENITADEILLITDQLVGRWAKERHVDEGFGDFVIRAGVIAPVIDSARDFYDVQEAM.

The [4Fe-4S] cluster site is built by Cys435, Cys441, Cys480, and Cys484. Cys484 contributes to the siroheme binding site.

The protein belongs to the nitrite and sulfite reductase 4Fe-4S domain family. In terms of assembly, alpha(8)-beta(8). The alpha component is a flavoprotein, the beta component is a hemoprotein. Siroheme serves as cofactor. The cofactor is [4Fe-4S] cluster.

The catalysed reaction is hydrogen sulfide + 3 NADP(+) + 3 H2O = sulfite + 3 NADPH + 4 H(+). It participates in sulfur metabolism; hydrogen sulfide biosynthesis; hydrogen sulfide from sulfite (NADPH route): step 1/1. Component of the sulfite reductase complex that catalyzes the 6-electron reduction of sulfite to sulfide. This is one of several activities required for the biosynthesis of L-cysteine from sulfate. The sequence is that of Sulfite reductase [NADPH] hemoprotein beta-component from Yersinia pestis bv. Antiqua (strain Antiqua).